The following is a 624-amino-acid chain: MKGQETRGFQSEVKQLLHLMIHSLYSNKEIFLRELISNASDAADKLRFRALSNPDLYEGDGELRVRVSFDKDKRTLTIADNGVGMNRDEVIDHLGTIAKSGTKSFLESMGSDQAKDSQLIGQFGVGFYSAFIVADKVTVRTRAAGDKPENGVFWESAGEGEYTVADITKNDRGTEITLHLREGEDEFLDDWRVRSIISKYSDHIALPVEIEKREEKDGETVISWEKINKAQALWTRNKSEIKDDEYNEFYKHIAHDFTDPLTWSHNRVEGKQEYTSLLYIPSQAPWDLWNRDHKHGLKLYVQRVFIMDDAEQFMPNYLRFVRGLIDSNDLPLNVSREILQDSTVTRNLRSALTKRVLQMLEKLAKDDAEKYQTFWKQFGLVLKEGPAEDHANQEAIAKLLRFASTHTDSSAQTVSLEDYVSRMKEGQEKIYYITADSYAAAKNSPHLELLRKKGIEVLLLSDRIDEWMMNYLTEFDGKAFQSVAKADESIEKLADEVDENAKEAEKALEPFVERVKTLLGDRVKDVRLTHRLTDTPAIVTTDADEMSTQMAKLFAAAGQSVPEVKYIFELNPDHVLVKRTADTKDEAQFKEWVELLLDQALFAERGTLEDPNQFIRRMNQLLVS.

An a; substrate-binding region spans residues 1–336; sequence MKGQETRGFQ…SNDLPLNVSR (336 aa). Positions 337–552 are b; the sequence is EILQDSTVTR…ADEMSTQMAK (216 aa). The segment at 553-624 is c; the sequence is LFAAAGQSVP…IRRMNQLLVS (72 aa).

The protein belongs to the heat shock protein 90 family. Homodimer. Post-translationally, UMPylated on a histidine residue by YdiU under ATP-limited conditions.

It is found in the cytoplasm. Its activity is regulated as follows. UMPylation of the chaperone by YdiU negatively regulates its activity, facilitating Salmonella survival under ATP-limited conditions. Its function is as follows. Molecular chaperone. Has ATPase activity. In Salmonella typhimurium (strain LT2 / SGSC1412 / ATCC 700720), this protein is Chaperone protein HtpG.